The chain runs to 161 residues: Endoribonuclease YbeY (161 aa).

Zn(2+)-binding residues include His-120, His-124, and His-130.

Belongs to the endoribonuclease YbeY family. It depends on Zn(2+) as a cofactor.

It is found in the cytoplasm. Single strand-specific metallo-endoribonuclease involved in late-stage 70S ribosome quality control and in maturation of the 3' terminus of the 16S rRNA. This chain is Endoribonuclease YbeY, found in Erythrobacter litoralis (strain HTCC2594).